We begin with the raw amino-acid sequence, 105 residues long: Dynein axonemal light chain 4 (105 aa).

It belongs to the dynein light chain family. Consists of at least two heavy chains and a number of intermediate and light chains.

It is found in the cytoplasm. It localises to the cytoskeleton. The protein localises to the cilium axoneme. Its function is as follows. Force generating protein of respiratory cilia. Produces force towards the minus ends of microtubules. Dynein has ATPase activity. This chain is Dynein axonemal light chain 4 (DNAL4), found in Bos taurus (Bovine).